The sequence spans 308 residues: Cytochrome b (308 aa).

4 helical membrane passes run 1-21 (FGLL…LLAA), 45-66 (WLIR…YLHI), 81-101 (WNIG…GYVL), and 146-166 (FFAL…VHLT). His-51 and His-65 together coordinate heme b. Heme b is bound by residues His-150 and His-164. A ubiquinone is bound at residue His-169. Helical transmembrane passes span 194–214 (TKDM…ALFS), 256–276 (LGGV…PLLH), and 288–308 (LSQI…WVGS).

Belongs to the cytochrome b family. In terms of assembly, the cytochrome bc1 complex contains 11 subunits: 3 respiratory subunits (MT-CYB, CYC1 and UQCRFS1), 2 core proteins (UQCRC1 and UQCRC2) and 6 low-molecular weight proteins (UQCRH/QCR6, UQCRB/QCR7, UQCRQ/QCR8, UQCR10/QCR9, UQCR11/QCR10 and a cleavage product of UQCRFS1). This cytochrome bc1 complex then forms a dimer. Heme b is required as a cofactor.

It is found in the mitochondrion inner membrane. Functionally, component of the ubiquinol-cytochrome c reductase complex (complex III or cytochrome b-c1 complex) that is part of the mitochondrial respiratory chain. The b-c1 complex mediates electron transfer from ubiquinol to cytochrome c. Contributes to the generation of a proton gradient across the mitochondrial membrane that is then used for ATP synthesis. This chain is Cytochrome b (MT-CYB), found in Pomatostomus temporalis (Grey-crowned babbler).